A 103-amino-acid polypeptide reads, in one-letter code: Large ribosomal subunit protein bL21 (103 aa).

The protein belongs to the bacterial ribosomal protein bL21 family. As to quaternary structure, part of the 50S ribosomal subunit. Contacts protein L20.

Functionally, this protein binds to 23S rRNA in the presence of protein L20. The sequence is that of Large ribosomal subunit protein bL21 from Chloroflexus aurantiacus (strain ATCC 29364 / DSM 637 / Y-400-fl).